The chain runs to 136 residues: MYAIVRGGGRQHRVAVGDVIEINAAAKGATATVGATVELPAVLVVDGPSVTTGATALADITVTGEVVGHAKGPKIRILKYKNKTGYRRRVGHRQPLALVKVTHIGPRAAADRKTAPKRASAKAAADQTTAAQATAE.

Residues 107 to 136 are disordered; that stretch reads RAAADRKTAPKRASAKAAADQTTAAQATAE. Low complexity predominate over residues 121-136; that stretch reads AKAAADQTTAAQATAE.

This sequence belongs to the bacterial ribosomal protein bL21 family. As to quaternary structure, part of the 50S ribosomal subunit. Contacts protein L20.

Its function is as follows. This protein binds to 23S rRNA in the presence of protein L20. This chain is Large ribosomal subunit protein bL21, found in Acidothermus cellulolyticus (strain ATCC 43068 / DSM 8971 / 11B).